The sequence spans 393 residues: Epoxyqueuosine reductase (393 aa).

D154 functions as the Proton donor in the catalytic mechanism. Residues 196–228 enclose the 4Fe-4S ferredoxin-type domain; sequence LPLPVDIPVQEGCHSCVACITSCPTGAIVEPYT. The [4Fe-4S] cluster site is built by C208, C211, C214, C218, C234, C261, C264, and C268.

This sequence belongs to the QueG family. Monomer. Cob(II)alamin is required as a cofactor. [4Fe-4S] cluster serves as cofactor.

Its subcellular location is the cytoplasm. It catalyses the reaction epoxyqueuosine(34) in tRNA + AH2 = queuosine(34) in tRNA + A + H2O. It participates in tRNA modification; tRNA-queuosine biosynthesis. In terms of biological role, catalyzes the conversion of epoxyqueuosine (oQ) to queuosine (Q), which is a hypermodified base found in the wobble positions of tRNA(Asp), tRNA(Asn), tRNA(His) and tRNA(Tyr). The protein is Epoxyqueuosine reductase of Shewanella oneidensis (strain ATCC 700550 / JCM 31522 / CIP 106686 / LMG 19005 / NCIMB 14063 / MR-1).